Consider the following 304-residue polypeptide: MSKVAIDLAGVKKSFGDKLVVNGLSFTVASGECFGLLGPNGAGKSTIARMLLGMTVPDAGKITVLGEPVGARSRLARKSIGVVPQFDNLDQEFTVRENLLVFGRYFGMSTRKIKEVIPSLLEFARLESKADARVGELSGGMKRRLTLARALINDPQLLVMDEPTTGLDPHARHLIWERLRFLLARGKTIILTTHFMEEAERLCDRLCVLEHGRKLAEGSPHALIEEHIGCQVIEIFGGNPQELVSLIRPYVQRVEVSGETLFCYTADPEQVRVQLRGRAGLRLLERPPSLEDVFLRLTGREMEK.

One can recognise an ABC transporter domain in the interval 6-236; sequence IDLAGVKKSF…HIGCQVIEIF (231 aa). 38–45 serves as a coordination point for ATP; the sequence is GPNGAGKS.

The protein belongs to the ABC transporter superfamily. Lipooligosaccharide exporter (TC 3.A.1.102) family. In terms of assembly, the complex is composed of two ATP-binding proteins (NodI) and two transmembrane proteins (NodJ).

The protein resides in the cell inner membrane. Its function is as follows. Part of the ABC transporter complex NodIJ involved in the export of the nodulation factors (Nod factors), the bacterial signal molecules that induce symbiosis and subsequent nodulation induction. Nod factors are LCO (lipo-chitin oligosaccharide), a modified beta-1,4-linked N-acetylglucosamine oligosaccharide. This subunit is responsible for energy coupling to the transport system. This is Nod factor export ATP-binding protein I from Rhizobium sp. (strain N33).